A 729-amino-acid chain; its full sequence is Polyribonucleotide nucleotidyltransferase (729 aa).

Mg(2+)-binding residues include D485 and D491. In terms of domain architecture, KH spans 552–611 (PRITTMKVAEDKIRTIIGKGGATIKGLIESTGVSIDIDDSGVIQLFSPDKMALEEAQKQI). In terms of domain architecture, S1 motif spans 621 to 689 (GQTYQGKVSK…KQGRVKLEWK (69 aa)). A disordered region spans residues 710–729 (TMEEQSEEINSGNKISEEEE).

The protein belongs to the polyribonucleotide nucleotidyltransferase family. As to quaternary structure, component of the RNA degradosome, which is a multiprotein complex involved in RNA processing and mRNA degradation. Mg(2+) is required as a cofactor.

It is found in the cytoplasm. The enzyme catalyses RNA(n+1) + phosphate = RNA(n) + a ribonucleoside 5'-diphosphate. Its function is as follows. Involved in mRNA degradation. Catalyzes the phosphorolysis of single-stranded polyribonucleotides processively in the 3'- to 5'-direction. In Legionella pneumophila (strain Paris), this protein is Polyribonucleotide nucleotidyltransferase.